The chain runs to 424 residues: Histidine--tRNA ligase (424 aa).

This sequence belongs to the class-II aminoacyl-tRNA synthetase family. In terms of assembly, homodimer.

It localises to the cytoplasm. The catalysed reaction is tRNA(His) + L-histidine + ATP = L-histidyl-tRNA(His) + AMP + diphosphate + H(+). This Shewanella woodyi (strain ATCC 51908 / MS32) protein is Histidine--tRNA ligase.